The sequence spans 420 residues: Caspase-12 (420 aa).

Residues 1–92 enclose the CARD domain; the sequence is MAAKRTHERD…QLSLQFPSDD (92 aa). Phosphoserine occurs at positions 85 and 90. The interval 93–115 is disordered; it reads EEDELQKMFTPSSASESRGKVED. Residues His251 and Cys299 contribute to the active site.

Belongs to the peptidase C14A family. In terms of assembly, heterotetramer that consists of two anti-parallel arranged heterodimers, each one formed by two subunits (Potential). May interact with TRAF2.

Its function is as follows. Involved in the activation cascade of caspases responsible for apoptosis execution. The polypeptide is Caspase-12 (Casp12) (Rattus norvegicus (Rat)).